The sequence spans 499 residues: Flotillin-like protein 2 (499 aa).

The S-palmitoyl cysteine moiety is linked to residue C37. Positions 243 to 319 (LREEAKVKAE…LRLTEKLKAE (77 aa)) form a coiled coil.

This sequence belongs to the band 7/mec-2 family. Flotillin subfamily. Post-translationally, may be palmitoylated.

It is found in the cell membrane. Its subcellular location is the membrane. The protein localises to the caveola. Functionally, may act as a scaffolding protein within caveolar membranes, functionally participating in formation of caveolae or caveolae-like vesicles. This chain is Flotillin-like protein 2 (FLOT2), found in Oryza sativa subsp. japonica (Rice).